The sequence spans 1178 residues: F-box/WD repeat-containing protein A-like protein (1178 aa).

Residues 1 to 208 (MQYVNGMDIV…TLPNLIKYIK (208 aa)) form the START domain. 3 disordered regions span residues 223–296 (KTPD…NLNE), 569–594 (SLII…DNGI), and 618–649 (SSSS…STFS). 2 stretches are compositionally biased toward low complexity: residues 229–293 (NPNL…SNEN) and 571–580 (IINSPPNSNN). In terms of domain architecture, F-box spans 717-763 (CSLFDLLPYEMIQYIFTLMDATHLIRMSRTCKYFNRICLDDNIWRDL). Residues 804–841 (KKSNNSSPLSASSSSSSPSPPLLPPPPPPIPQLPDMLL) form a disordered region. Residues 809-820 (SSPLSASSSSSS) show a composition bias toward low complexity. Over residues 821-835 (PSPPLLPPPPPPIPQ) the composition is skewed to pro residues. WD repeat units follow at residues 886 to 923 (GHKG…CEST), 925 to 979 (RCGA…IEKE), 981 to 1017 (RFLY…ELQM), 1020 to 1059 (IENT…TELV), 1062 to 1100 (GHKG…SAIH), 1104 to 1141 (SHSS…EPNL), and 1146 to 1178 (NNLS…FNSK).

In terms of biological role, substrate recognition component of a SCF (SKP1-CUL1-F-box protein) E3 ubiquitin-protein ligase complex which mediates the ubiquitination and subsequent proteasomal degradation of target proteins. The sequence is that of F-box/WD repeat-containing protein A-like protein from Dictyostelium discoideum (Social amoeba).